The chain runs to 243 residues: Small ribosomal subunit protein uS3 (243 aa).

A KH type-2 domain is found at Ile-39–Glu-110. The segment at Gly-221–Ser-243 is disordered. A compositionally biased stretch (basic and acidic residues) spans Gln-233–Ser-243.

Belongs to the universal ribosomal protein uS3 family. Part of the 30S ribosomal subunit. Forms a tight complex with proteins S10 and S14.

Functionally, binds the lower part of the 30S subunit head. Binds mRNA in the 70S ribosome, positioning it for translation. The sequence is that of Small ribosomal subunit protein uS3 from Prochlorococcus marinus subsp. pastoris (strain CCMP1986 / NIES-2087 / MED4).